The primary structure comprises 124 residues: Protein YebF (124 aa).

A signal peptide spans 1–27; that stretch reads MKTCHIINRVGLSGVALLLTVSFTVSA. Residues 36-123 enclose the YebF/Cmi domain; sequence KFISCDNLTK…QQNTISYSEL (88 aa). Cys-40 and Cys-113 are disulfide-bonded.

This sequence belongs to the YebF family.

The protein localises to the secreted. The polypeptide is Protein YebF (Photorhabdus laumondii subsp. laumondii (strain DSM 15139 / CIP 105565 / TT01) (Photorhabdus luminescens subsp. laumondii)).